The primary structure comprises 274 residues: Dermonecrotic toxin SdSicTox-betaIIB1biii (274 aa).

The active site involves His-5. Mg(2+) is bound by residues Glu-25 and Asp-27. His-41 functions as the Nucleophile in the catalytic mechanism. 2 disulfides stabilise this stretch: Cys-45–Cys-51 and Cys-47–Cys-190. Asp-85 lines the Mg(2+) pocket.

This sequence belongs to the arthropod phospholipase D family. Class II subfamily. The cofactor is Mg(2+). In terms of tissue distribution, expressed by the venom gland.

Its subcellular location is the secreted. It carries out the reaction an N-(acyl)-sphingosylphosphocholine = an N-(acyl)-sphingosyl-1,3-cyclic phosphate + choline. The enzyme catalyses an N-(acyl)-sphingosylphosphoethanolamine = an N-(acyl)-sphingosyl-1,3-cyclic phosphate + ethanolamine. It catalyses the reaction a 1-acyl-sn-glycero-3-phosphocholine = a 1-acyl-sn-glycero-2,3-cyclic phosphate + choline. The catalysed reaction is a 1-acyl-sn-glycero-3-phosphoethanolamine = a 1-acyl-sn-glycero-2,3-cyclic phosphate + ethanolamine. Functionally, dermonecrotic toxins cleave the phosphodiester linkage between the phosphate and headgroup of certain phospholipids (sphingolipid and lysolipid substrates), forming an alcohol (often choline) and a cyclic phosphate. This toxin acts on sphingomyelin (SM). It may also act on ceramide phosphoethanolamine (CPE), lysophosphatidylcholine (LPC) and lysophosphatidylethanolamine (LPE), but not on lysophosphatidylserine (LPS), and lysophosphatidylglycerol (LPG). It acts by transphosphatidylation, releasing exclusively cyclic phosphate products as second products. Induces dermonecrosis, hemolysis, increased vascular permeability, edema, inflammatory response, and platelet aggregation. This chain is Dermonecrotic toxin SdSicTox-betaIIB1biii, found in Sicarius cf. damarensis (strain GJB-2008) (Six-eyed sand spider).